The primary structure comprises 414 residues: Transcription factor FAMA (414 aa).

Disordered regions lie at residues methionine 1–aspartate 61 and lysine 142–methionine 197. 2 stretches are compositionally biased toward low complexity: residues glycine 12–glycine 24 and glutamine 35–glutamine 49. Residues arginine 166–glutamate 175 are compositionally biased toward basic and acidic residues. Positions valine 176–threonine 185 are enriched in basic residues. The span at lysine 187–methionine 197 shows a compositional bias: basic and acidic residues. A bHLH domain is found at serine 194–leucine 245. The LxCxE motif signature appears at leucine 249 to glutamate 253.

In terms of assembly, interacts with FAMA through its LxCxE motif. Self-interacts. Also interacts with bHLH071 and bHLH093. Interacts with RBR1. Resctricted to stomatal cell lineages (at protein level). Expressed in roots, leaves, stems, and flowers.

Its subcellular location is the nucleus. Transcription activator. Together with MYB88 and MYB124, ensures that stomata contain just two guard cells (GCs) by enforcing a single symmetric precursor cell division before stomatal maturity. Together with SPCH and MUTE, regulates the stomata formation. Required to promote differentiation and morphogenesis of stomatal guard cells and to halt proliferative divisions in their immediate precursors. Mediates the formation of stomata. Prevents histone H3K27me3 marks and derepresses stem cell gene expression. This chain is Transcription factor FAMA (FAMA), found in Arabidopsis thaliana (Mouse-ear cress).